The sequence spans 337 residues: Pentalenene synthase (337 aa).

The Mg(2+) site is built by aspartate 80 and aspartate 84. Positions 80 to 84 (DDLFD) match the DDXXD motif motif. Cysteine 128 and cysteine 136 are disulfide-bonded. Asparagine 219, serine 223, and glutamate 227 together coordinate Mg(2+).

This sequence belongs to the terpene synthase family. As to quaternary structure, monomer. Requires Mg(2+) as cofactor.

The catalysed reaction is (2E,6E)-farnesyl diphosphate = pentalenene + diphosphate. The protein operates within sesquiterpene biosynthesis; pentalenene biosynthesis; pentalenene from farnesyl diphosphate: step 1/1. It functions in the pathway antibiotic biosynthesis; pentalenolactone biosynthesis. In terms of biological role, catalyzes the cyclization of farnesyl diphosphate (FPP) to the tricyclic sesquiterpene pentalenene, which is the hydrocarbon precursor of the pentalenolactone family of antibiotics produced by a variety of Streptomyces species. The sequence is that of Pentalenene synthase (penA) from Streptomyces exfoliatus (Streptomyces hydrogenans).